We begin with the raw amino-acid sequence, 401 residues long: Heat stress transcription factor A-4a (401 aa).

The DNA-binding element occupies 13-107 (LPPFLTKTYE…LMKNIHRRKP (95 aa)). The segment at 122 to 188 (PLTDSERVRM…TMVSFVSQVL (67 aa)) is hydrophobic repeat HR-A/B. The short motif at 207-213 (RKRRFPR) is the Nuclear localization signal element. Residues 256 to 265 (IAIWENLVSD) carry the AHA1 motif. The AHA2 motif lies at 341-350 (DGFWQQFFSE). The interval 351-373 (NPGSTEQREVQLERKDDKDKAGV) is disordered. A compositionally biased stretch (basic and acidic residues) spans 356-373 (EQREVQLERKDDKDKAGV). A Nuclear export signal motif is present at residues 388-395 (ITEQLGHL).

Belongs to the HSF family. Class A subfamily. In terms of assembly, homotrimer. Post-translationally, exhibits temperature-dependent phosphorylation.

Its subcellular location is the cytoplasm. The protein resides in the nucleus. Functionally, transcriptional activator that specifically binds DNA sequence 5'-AGAAnnTTCT-3' known as heat shock promoter elements (HSE). This chain is Heat stress transcription factor A-4a (HSFA4A), found in Arabidopsis thaliana (Mouse-ear cress).